Here is a 239-residue protein sequence, read N- to C-terminus: Ribosomal RNA small subunit methyltransferase G (239 aa).

S-adenosyl-L-methionine contacts are provided by residues Gly79, Phe84, 130 to 131 (AE), and Arg149.

The protein belongs to the methyltransferase superfamily. RNA methyltransferase RsmG family.

It localises to the cytoplasm. Its function is as follows. Specifically methylates the N7 position of a guanine in 16S rRNA. This is Ribosomal RNA small subunit methyltransferase G from Lactobacillus johnsonii (strain CNCM I-12250 / La1 / NCC 533).